Reading from the N-terminus, the 186-residue chain is Peptidyl-tRNA hydrolase (186 aa).

Y14 is a tRNA binding site. H19 (proton acceptor) is an active-site residue. 3 residues coordinate tRNA: Y64, N66, and N112.

The protein belongs to the PTH family. Monomer.

It is found in the cytoplasm. It carries out the reaction an N-acyl-L-alpha-aminoacyl-tRNA + H2O = an N-acyl-L-amino acid + a tRNA + H(+). Hydrolyzes ribosome-free peptidyl-tRNAs (with 1 or more amino acids incorporated), which drop off the ribosome during protein synthesis, or as a result of ribosome stalling. Its function is as follows. Catalyzes the release of premature peptidyl moieties from peptidyl-tRNA molecules trapped in stalled 50S ribosomal subunits, and thus maintains levels of free tRNAs and 50S ribosomes. The polypeptide is Peptidyl-tRNA hydrolase (Bacillus anthracis).